A 510-amino-acid polypeptide reads, in one-letter code: Laccase (510 aa).

Plastocyanin-like domains are found at residues 45-79, 99-174, 242-317, and 372-506; these read PTKLWTYNGSLPGPTIKANRNEKVKVKWMNKLPLK, KTVV…LISD, YLEV…IVLK, and LTLT…MRPM. Residues His-103, His-105, His-151, and His-153 each contribute to the Cu cation site. Positions 419, 422, 424, 491, 492, 493, 497, and 502 each coordinate Cu cation.

Belongs to the multicopper oxidase family. Cu(2+) serves as cofactor.

It catalyses the reaction 4 hydroquinone + O2 = 4 benzosemiquinone + 2 H2O. Its activity is regulated as follows. Resistant to alkali and organic solvents such as methanol, ethanol and acetone. Resistant to EDTA, which might be explained by the spatial protection of copper ions in the active sites. Inhibited by DMSO. Strongly inhibited by Fe(2+) and DTT. Its function is as follows. Multicopper oxidase that catalyzes the oxidation of a variety of substrates, including phenolic and non-phenolic compounds. Substrates include 2,6-dimethoxyphenol (2,6-DMP) and the non-phenolic compound 2,2'-azino-bis(3-ethylbenzothiazoline-6-sulfonic acid) (ABTS). Cannot use guaiacol and catechol. This chain is Laccase, found in Bacillus stratosphericus.